Consider the following 465-residue polypeptide: Cysteine--tRNA ligase (465 aa).

Zn(2+) is bound at residue Cys-29. The 'HIGH' region signature appears at 31 to 41 (PTVYNYIHIGN). Cys-209, His-234, and Glu-238 together coordinate Zn(2+). The short motif at 266-270 (KMSKS) is the 'KMSKS' region element. Lys-269 is a binding site for ATP. A Phosphoserine modification is found at Ser-270.

It belongs to the class-I aminoacyl-tRNA synthetase family. As to quaternary structure, monomer. Zn(2+) serves as cofactor.

It localises to the cytoplasm. It catalyses the reaction tRNA(Cys) + L-cysteine + ATP = L-cysteinyl-tRNA(Cys) + AMP + diphosphate. The protein is Cysteine--tRNA ligase of Anoxybacillus flavithermus (strain DSM 21510 / WK1).